The sequence spans 294 residues: ATP synthase gamma chain (294 aa).

It belongs to the ATPase gamma chain family. F-type ATPases have 2 components, CF(1) - the catalytic core - and CF(0) - the membrane proton channel. CF(1) has five subunits: alpha(3), beta(3), gamma(1), delta(1), epsilon(1). CF(0) has three main subunits: a, b and c.

The protein resides in the cell membrane. Its function is as follows. Produces ATP from ADP in the presence of a proton gradient across the membrane. The gamma chain is believed to be important in regulating ATPase activity and the flow of protons through the CF(0) complex. The chain is ATP synthase gamma chain from Ruminiclostridium cellulolyticum (strain ATCC 35319 / DSM 5812 / JCM 6584 / H10) (Clostridium cellulolyticum).